The sequence spans 602 residues: Elongation factor 4 (602 aa).

Residues 7 to 189 (KYIRNFSIVA…AIVNKVPAPD (183 aa)) enclose the tr-type G domain. GTP is bound by residues 19–24 (DHGKST) and 136–139 (NKID).

Belongs to the TRAFAC class translation factor GTPase superfamily. Classic translation factor GTPase family. LepA subfamily.

The protein localises to the cell membrane. The enzyme catalyses GTP + H2O = GDP + phosphate + H(+). Required for accurate and efficient protein synthesis under certain stress conditions. May act as a fidelity factor of the translation reaction, by catalyzing a one-codon backward translocation of tRNAs on improperly translocated ribosomes. Back-translocation proceeds from a post-translocation (POST) complex to a pre-translocation (PRE) complex, thus giving elongation factor G a second chance to translocate the tRNAs correctly. Binds to ribosomes in a GTP-dependent manner. This chain is Elongation factor 4, found in Clostridium botulinum (strain 657 / Type Ba4).